We begin with the raw amino-acid sequence, 300 residues long: uncharacterized protein (300 aa).

The active-site Proton donor is Y53. 210 to 220 is an NADP(+) binding site; the sequence is SPLAGGKVFTE.

The protein belongs to the aldo/keto reductase family. Aldo/keto reductase 2 subfamily.

This is an uncharacterized protein from Bacillus subtilis (strain 168).